Reading from the N-terminus, the 101-residue chain is Replication restart protein PriB (101 aa).

The SSB domain occupies 1-101 (MTTNSLVLSG…IHAENVELKT (101 aa)).

The protein belongs to the PriB family. Homodimer. Interacts with PriA and DnaT. Component of the replication restart primosome. Primosome assembly occurs via a 'hand-off' mechanism. PriA binds to replication forks, subsequently PriB then DnaT bind; DnaT then displaces ssDNA to generate the helicase loading substrate.

In terms of biological role, involved in the restart of stalled replication forks, which reloads the replicative helicase on sites other than the origin of replication; the PriA-PriB pathway is the major replication restart pathway. During primosome assembly it facilitates complex formation between PriA and DnaT on DNA; stabilizes PriA on DNA. Stimulates the DNA unwinding activity of PriA helicase. The chain is Replication restart protein PriB from Shewanella putrefaciens (strain CN-32 / ATCC BAA-453).